We begin with the raw amino-acid sequence, 435 residues long: Protein translocase subunit SecY (435 aa).

10 helical membrane passes run 19–39 (ILFT…TVPG), 68–88 (FSVF…VQLL), 116–136 (YIAL…FDTL), 147–167 (VQTY…VTWL), 179–199 (GVSM…IKGI), 216–236 (FIFV…TTFV), 269–289 (VIPV…FQVV), 311–331 (ISGM…YTFV), 372–392 (VGSL…DVFG), and 395–415 (DAVA…IEGM).

Belongs to the SecY/SEC61-alpha family. In terms of assembly, component of the Sec protein translocase complex. Heterotrimer consisting of SecY, SecE and SecG subunits. The heterotrimers can form oligomers, although 1 heterotrimer is thought to be able to translocate proteins. Interacts with the ribosome. Interacts with SecDF, and other proteins may be involved. Interacts with SecA.

The protein resides in the cell membrane. In terms of biological role, the central subunit of the protein translocation channel SecYEG. Consists of two halves formed by TMs 1-5 and 6-10. These two domains form a lateral gate at the front which open onto the bilayer between TMs 2 and 7, and are clamped together by SecE at the back. The channel is closed by both a pore ring composed of hydrophobic SecY resides and a short helix (helix 2A) on the extracellular side of the membrane which forms a plug. The plug probably moves laterally to allow the channel to open. The ring and the pore may move independently. The sequence is that of Protein translocase subunit SecY from Streptococcus sanguinis (strain SK36).